The following is a 136-amino-acid chain: MLRTILGSKIHRATVTQADLDYVGSITIDADLVNAAGLIEGEKVAVVDITNGARIETYVITGDAGTGSICINGAAAHLINPGDLVIIMSYLQATDAEARAYQPNIVHVDADNRIVALGNDAGEPIPGSSLLSSRSL.

Serine 25 (schiff-base intermediate with substrate; via pyruvic acid) is an active-site residue. Serine 25 bears the Pyruvic acid (Ser) mark. Threonine 57 contributes to the substrate binding site. Residue tyrosine 58 is the Proton donor of the active site. 73 to 75 contributes to the substrate binding site; the sequence is GAA.

It belongs to the PanD family. In terms of assembly, heterooctamer of four alpha and four beta subunits. Requires pyruvate as cofactor. Post-translationally, is synthesized initially as an inactive proenzyme, which is activated by self-cleavage at a specific serine bond to produce a beta-subunit with a hydroxyl group at its C-terminus and an alpha-subunit with a pyruvoyl group at its N-terminus.

Its subcellular location is the cytoplasm. It carries out the reaction L-aspartate + H(+) = beta-alanine + CO2. It functions in the pathway cofactor biosynthesis; (R)-pantothenate biosynthesis; beta-alanine from L-aspartate: step 1/1. Its function is as follows. Catalyzes the pyruvoyl-dependent decarboxylation of aspartate to produce beta-alanine. This is Aspartate 1-decarboxylase from Corynebacterium efficiens (strain DSM 44549 / YS-314 / AJ 12310 / JCM 11189 / NBRC 100395).